The following is a 197-amino-acid chain: Protein Hikeshi (197 aa).

A required for F-X-F-G repeats-nucleoporins recognition and nuclear import region spans residues 18-55 (VAEDKFVFDLPDYENINHVVVFMLGTIPFPEGMGGSVY). Positions 124–134 (QTPVGSAAVSS) are flexible linker region involved in nuclear import of HSP70 proteins.

It belongs to the OPI10 family. Forms an asymmetric homodimer; required for binding and nuclear import of HSP70 proteins. Interacts with ATP-bound HSP70 proteins. Interacts with NUP62 and NUP153 (via F-X-F-G repeats). Interacts with HSPA8. As to expression, expressed in the central white matter of newborn and adult brain, particularly in regions where oligodendrocytes are generated.

It localises to the cytoplasm. The protein localises to the cytosol. The protein resides in the nucleus. Acts as a specific nuclear import carrier for HSP70 proteins following heat-shock stress: acts by mediating the nucleoporin-dependent translocation of ATP-bound HSP70 proteins into the nucleus. HSP70 proteins import is required to protect cells from heat shock damages. Does not translocate ADP-bound HSP70 proteins into the nucleus. May also be indirectly required for organization and/or function of the secretory apparatus in Club cells in lung. This Mus musculus (Mouse) protein is Protein Hikeshi.